The following is a 218-amino-acid chain: Small ribosomal subunit protein uS3c (218 aa).

Residues 43-118 (IKNYVQKNMK…KLNISITRIE (76 aa)) form the KH type-2 domain.

The protein belongs to the universal ribosomal protein uS3 family. In terms of assembly, part of the 30S ribosomal subunit.

The protein resides in the plastid. The protein localises to the chloroplast. The chain is Small ribosomal subunit protein uS3c (rps3) from Populus alba (White poplar).